The chain runs to 385 residues: Serpin-Z10 (385 aa).

The segment at 333–357 is RCL; sequence GTEAAAVSVGVVSCTSFRRNPDFVA.

This sequence belongs to the serpin family.

In terms of biological role, probable serine protease inhibitor. The sequence is that of Serpin-Z10 from Arabidopsis thaliana (Mouse-ear cress).